Here is a 353-residue protein sequence, read N- to C-terminus: Deoxyribonuclease-2-alpha (353 aa).

The signal sequence occupies residues 1–19; sequence MATLRSLLLAALLWVPAEA. An intrachain disulfide couples Cys22 to Cys161. Residues Asn71, Asn88, Asn214, and Asn268 are each glycosylated (N-linked (GlcNAc...) asparagine). Disulfide bonds link Cys269-Cys349 and Cys310-Cys329. His297 is an active-site residue.

It belongs to the DNase II family. As to expression, highly expressed in fetal liver macrophages.

The protein resides in the lysosome. The enzyme catalyses Endonucleolytic cleavage to nucleoside 3'-phosphates and 3'-phosphooligonucleotide end-products.. In terms of biological role, hydrolyzes DNA under acidic conditions with a preference for double-stranded DNA. Plays a major role in the clearance of nucleic acids generated through apoptosis, hence preventing autoinflammation. Necessary for proper fetal development and for definitive erythropoiesis in fetal liver and bone marrow, where it degrades nuclear DNA expelled from erythroid precursor cells. The protein is Deoxyribonuclease-2-alpha (Dnase2) of Mus musculus (Mouse).